Reading from the N-terminus, the 66-residue chain is MPKMKTKSSAKKRFKVTATGKVMAGQAGKRHGMIKRTTKFIRDARGTTTLSAPDAKIVKGYMPYDR.

This sequence belongs to the bacterial ribosomal protein bL35 family.

This Ruegeria pomeroyi (strain ATCC 700808 / DSM 15171 / DSS-3) (Silicibacter pomeroyi) protein is Large ribosomal subunit protein bL35.